A 743-amino-acid polypeptide reads, in one-letter code: Type VI secretion system spike protein VgrG1 (743 aa).

The protein belongs to the VgrG protein family.

It is found in the secreted. The enzyme catalyses L-arginyl-[protein] + NAD(+) = N(omega)-(ADP-D-ribosyl)-L-arginyl-[protein] + nicotinamide + H(+). Part of the type VI secretion system specialized secretion system, which delivers several virulence factors in both prokaryotic and eukaryotic cells during infection. Acts directly as an secreted effector with an actin ADP-ribosyltransferase activity that disrupts the host actin cytoskeleton, leading to a decrease in host cell viability and an increase in apoptosis. This is Type VI secretion system spike protein VgrG1 (vgrG1) from Aeromonas hydrophila subsp. hydrophila (strain ATCC 7966 / DSM 30187 / BCRC 13018 / CCUG 14551 / JCM 1027 / KCTC 2358 / NCIMB 9240 / NCTC 8049).